The primary structure comprises 232 residues: Ubiquinone biosynthesis O-methyltransferase (232 aa).

4 residues coordinate S-adenosyl-L-methionine: Arg36, Gly55, Asp76, and Met120.

This sequence belongs to the methyltransferase superfamily. UbiG/COQ3 family.

It catalyses the reaction a 3-demethylubiquinol + S-adenosyl-L-methionine = a ubiquinol + S-adenosyl-L-homocysteine + H(+). The enzyme catalyses a 3-(all-trans-polyprenyl)benzene-1,2-diol + S-adenosyl-L-methionine = a 2-methoxy-6-(all-trans-polyprenyl)phenol + S-adenosyl-L-homocysteine + H(+). The protein operates within cofactor biosynthesis; ubiquinone biosynthesis. Its function is as follows. O-methyltransferase that catalyzes the 2 O-methylation steps in the ubiquinone biosynthetic pathway. The protein is Ubiquinone biosynthesis O-methyltransferase of Burkholderia multivorans (strain ATCC 17616 / 249).